Reading from the N-terminus, the 98-residue chain is Mu-type opioid receptor (98 aa).

Over 1–9 (YTKMKTATN) the chain is Cytoplasmic. The helical transmembrane segment at 10–34 (IYIFNLALADALATSTLPFQSVNYL) threads the bilayer. Residues 35–45 (MGTWPFGTILC) are Extracellular-facing. The helical transmembrane segment at 46–68 (KIVISIDYYNMFTSIFTLCTMSV) threads the bilayer. Topologically, residues 69–88 (DRYIAVCHPVKALDFRTPRN) are cytoplasmic. Y71 carries the phosphotyrosine modification. A helical transmembrane segment spans residues 89–98 (AKTVNVCNWI).

It belongs to the G-protein coupled receptor 1 family. As to quaternary structure, forms homooligomers and heterooligomers with other GPCRs, such as OPRD1, OPRK1, OPRL1, NPFFR2, ADRA2A, SSTR2, CNR1 and CCR5 (probably in dimeric forms). Interacts with heterotrimeric G proteins; interaction with a heterotrimeric complex containing GNAI1, GNB1 and GNG2 stabilizes the active conformation of the receptor and increases its affinity for endomorphin-2, the synthetic opioid peptide DAMGO and for morphinan agonists. Interacts with PPL; the interaction disrupts agonist-mediated G-protein activation. Interacts (via C-terminus) with DNAJB4 (via C-terminus). Interacts with calmodulin; the interaction inhibits the constitutive activity of OPRM1; it abolishes basal and attenuates agonist-stimulated G-protein coupling. Interacts with FLNA, PLD2, RANBP9 and WLS and GPM6A. Interacts with RTP4. Interacts with SYP and GNAS. Interacts with RGS9, RGS17, RGS20, RGS4, PPP1R9B and HINT1. Post-translationally, phosphorylated. Differentially phosphorylated in basal and agonist-induced conditions. Agonist-mediated phosphorylation modulates receptor internalization. Phosphorylated by GRK2 in a agonist-dependent manner. Phosphorylated on tyrosine residues; the phosphorylation is involved in agonist-induced G-protein-independent receptor down-regulation. Phosphorylated. Differentially phosphorylated in basal and agonist-induced conditions. Agonist-mediated phosphorylation modulates receptor internalization. Phosphorylated by GRK2 in a agonist-dependent manner. Phosphorylated on tyrosine residues; the phosphorylation is involved in agonist-induced G-protein-independent receptor down-regulation. In terms of processing, ubiquitinated. A basal ubiquitination seems not to be related to degradation. Ubiquitination is increased upon formation of OPRM1:OPRD1 oligomers leading to proteasomal degradation; the ubiquitination is diminished by RTP4.

Its subcellular location is the cell membrane. It localises to the cell projection. It is found in the axon. The protein resides in the perikaryon. The protein localises to the dendrite. Its subcellular location is the endosome. Its function is as follows. Receptor for endogenous opioids such as beta-endorphin and endomorphin. Receptor for natural and synthetic opioids including morphine, heroin, DAMGO, fentanyl, etorphine, buprenorphin and methadone. Also activated by enkephalin peptides, such as Met-enkephalin or Met-enkephalin-Arg-Phe, with higher affinity for Met-enkephalin-Arg-Phe. Agonist binding to the receptor induces coupling to an inactive GDP-bound heterotrimeric G-protein complex and subsequent exchange of GDP for GTP in the G-protein alpha subunit leading to dissociation of the G-protein complex with the free GTP-bound G-protein alpha and the G-protein beta-gamma dimer activating downstream cellular effectors. The agonist- and cell type-specific activity is predominantly coupled to pertussis toxin-sensitive G(i) and G(o) G alpha proteins, GNAI1, GNAI2, GNAI3 and GNAO1, and to a lesser extent to pertussis toxin-insensitive G alpha proteins GNAZ and GNA15. They mediate an array of downstream cellular responses, including inhibition of adenylate cyclase activity and both N-type and L-type calcium channels, activation of inward rectifying potassium channels, mitogen-activated protein kinase (MAPK), phospholipase C (PLC), phosphoinositide/protein kinase (PKC), phosphoinositide 3-kinase (PI3K) and regulation of NF-kappa-B. Also couples to adenylate cyclase stimulatory G alpha proteins. The selective temporal coupling to G-proteins and subsequent signaling can be regulated by RGSZ proteins, such as RGS9, RGS17 and RGS4. Phosphorylation by members of the GPRK subfamily of Ser/Thr protein kinases and association with beta-arrestins is involved in short-term receptor desensitization. Beta-arrestins associate with the GPRK-phosphorylated receptor and uncouple it from the G-protein thus terminating signal transduction. The phosphorylated receptor is internalized through endocytosis via clathrin-coated pits which involves beta-arrestins. The activation of the ERK pathway occurs either in a G-protein-dependent or a beta-arrestin-dependent manner and is regulated by agonist-specific receptor phosphorylation. Acts as a class A G-protein coupled receptor (GPCR) which dissociates from beta-arrestin at or near the plasma membrane and undergoes rapid recycling. Receptor down-regulation pathways are varying with the agonist and occur dependent or independent of G-protein coupling. Endogenous ligands induce rapid desensitization, endocytosis and recycling. Heterooligomerization with other GPCRs can modulate agonist binding, signaling and trafficking properties. Involved in neurogenesis. This Cavia porcellus (Guinea pig) protein is Mu-type opioid receptor (OPRM1).